A 662-amino-acid chain; its full sequence is DNA ligase (662 aa).

Residues 32–36, 75–76, and Glu-106 contribute to the NAD(+) site; these read DAEYD and SL. The active-site N6-AMP-lysine intermediate is the Lys-108. NAD(+) contacts are provided by Arg-129, Glu-164, Lys-271, and Lys-295. 4 residues coordinate Zn(2+): Cys-389, Cys-392, Cys-407, and Cys-413. A BRCT domain is found at 580–662; it reads SSNSVLNNKI…HKVISLGVFK (83 aa).

It belongs to the NAD-dependent DNA ligase family. LigA subfamily. Requires Mg(2+) as cofactor. Mn(2+) is required as a cofactor.

It carries out the reaction NAD(+) + (deoxyribonucleotide)n-3'-hydroxyl + 5'-phospho-(deoxyribonucleotide)m = (deoxyribonucleotide)n+m + AMP + beta-nicotinamide D-nucleotide.. In terms of biological role, DNA ligase that catalyzes the formation of phosphodiester linkages between 5'-phosphoryl and 3'-hydroxyl groups in double-stranded DNA using NAD as a coenzyme and as the energy source for the reaction. It is essential for DNA replication and repair of damaged DNA. The sequence is that of DNA ligase from Wolbachia pipientis wMel.